The sequence spans 431 residues: Chaperone SurA (431 aa).

An N-terminal signal peptide occupies residues M1–A22. 2 PpiC domains span residues A173 to D274 and T283 to D383.

It localises to the periplasm. It carries out the reaction [protein]-peptidylproline (omega=180) = [protein]-peptidylproline (omega=0). Chaperone involved in the correct folding and assembly of outer membrane proteins. Recognizes specific patterns of aromatic residues and the orientation of their side chains, which are found more frequently in integral outer membrane proteins. May act in both early periplasmic and late outer membrane-associated steps of protein maturation. This is Chaperone SurA from Pseudoalteromonas translucida (strain TAC 125).